Reading from the N-terminus, the 519-residue chain is MTPAPEPQDPPTIHEPVATEQTDDISDWDVESDYEDGYGAPSKSQAQGGASAADRPKINAHARIDDQMTDLARHASKIRLDNLTMQQIFRDKDRTDNATSDQVLDNHTRMIILNMLNRNIISEIYGTISTGKEANVYNAVAYDNNGERIERAVKVYKTIILGFKDRERYLAGEQRFKTIVDKALSAPRKMIKLWAEKEFRNLKRLHTAGIPCPEPIYLKYNVMVMGFLGDHTNGYAFPRLHDTKITGETLEETEAEWRRLYINLLSMMRRMYQVCGLVHGDLSEYNILYNEGVLYIIDVSQSVEHDHIEATNFLRMDIRNVNDFFARRGVDTLSDRTVYHFITDSTGAVDENGMRKAIDNLYATRPPLAESEEARAEQEIDNQVFRNQFIPTTLEEVYNLEVELGKKVDTRLYQHMLADSKVPESTGGEHKSGEGGESGSEDEEGDEGESGEVESGDEEREEGEGDRFEKKRPRGKKHLDKAEKHAHKMAVKEAKREKRKEKMPKHVKKKLVAANKKRK.

Residues 1-10 (MTPAPEPQDP) are compositionally biased toward pro residues. The interval 1 to 54 (MTPAPEPQDPPTIHEPVATEQTDDISDWDVESDYEDGYGAPSKSQAQGGASAAD) is disordered. A compositionally biased stretch (acidic residues) spans 21 to 36 (QTDDISDWDVESDYED). Residues 39–53 (GAPSKSQAQGGASAA) are compositionally biased toward low complexity. In terms of domain architecture, Protein kinase spans 122-519 (SEIYGTISTG…KLVAANKKRK (398 aa)). ATP is bound by residues K154 and L228. The Proton acceptor role is filled by D281. N286 and D298 together coordinate Mg(2+). D298 serves as the catalytic 4-aspartylphosphate intermediate. The tract at residues 418-519 (ADSKVPESTG…KLVAANKKRK (102 aa)) is disordered. Residues 439 to 464 (GSEDEEGDEGESGEVESGDEEREEGE) are compositionally biased toward acidic residues. Positions 440–519 (SEDEEGDEGE…KLVAANKKRK (80 aa)) are association with (pre-)40S ribosomal particle. Composition is skewed to basic residues over residues 470-489 (KKRP…AHKM) and 497-519 (EKRK…KKRK).

The protein belongs to the protein kinase superfamily. RIO-type Ser/Thr kinase family. The cofactor is Mg(2+). In terms of processing, autophosphorylated.

The protein resides in the cytoplasm. The catalysed reaction is L-seryl-[protein] + ATP = O-phospho-L-seryl-[protein] + ADP + H(+). It catalyses the reaction L-threonyl-[protein] + ATP = O-phospho-L-threonyl-[protein] + ADP + H(+). It carries out the reaction ATP + H2O = ADP + phosphate + H(+). In terms of biological role, involved in the final steps of cytoplasmic maturation of the 40S ribosomal subunit. In vitro, has strong ATPase activity and only low protein kinase activity. The chain is Serine/threonine-protein kinase RIO1 from Chaetomium thermophilum (strain DSM 1495 / CBS 144.50 / IMI 039719) (Thermochaetoides thermophila).